Reading from the N-terminus, the 473-residue chain is tRNA modification GTPase MnmE (473 aa).

(6S)-5-formyl-5,6,7,8-tetrahydrofolate is bound by residues Arg30, Glu95, and Arg134. A TrmE-type G domain is found at 230–394 (GVSTVIAGRP…LKLLMASMVE (165 aa)). GTP contacts are provided by residues 240 to 245 (NAGKST), 259 to 265 (SHMPGTT), and 284 to 287 (DTAG). 2 residues coordinate Mg(2+): Ser244 and Thr265. Residue Lys473 coordinates (6S)-5-formyl-5,6,7,8-tetrahydrofolate.

It belongs to the TRAFAC class TrmE-Era-EngA-EngB-Septin-like GTPase superfamily. TrmE GTPase family. In terms of assembly, homodimer. Heterotetramer of two MnmE and two MnmG subunits. The cofactor is K(+).

The protein localises to the cytoplasm. In terms of biological role, exhibits a very high intrinsic GTPase hydrolysis rate. Involved in the addition of a carboxymethylaminomethyl (cmnm) group at the wobble position (U34) of certain tRNAs, forming tRNA-cmnm(5)s(2)U34. The protein is tRNA modification GTPase MnmE of Chlorobium luteolum (strain DSM 273 / BCRC 81028 / 2530) (Pelodictyon luteolum).